Here is a 333-residue protein sequence, read N- to C-terminus: Beta-ketoacyl-[acyl-carrier-protein] synthase III (333 aa).

Residues cysteine 117 and histidine 257 contribute to the active site. The ACP-binding stretch occupies residues 258–262 (QANLR). Residue asparagine 287 is part of the active site.

It belongs to the thiolase-like superfamily. FabH family. Homodimer.

It localises to the cytoplasm. It catalyses the reaction malonyl-[ACP] + acetyl-CoA + H(+) = 3-oxobutanoyl-[ACP] + CO2 + CoA. It functions in the pathway lipid metabolism; fatty acid biosynthesis. In terms of biological role, catalyzes the condensation reaction of fatty acid synthesis by the addition to an acyl acceptor of two carbons from malonyl-ACP. Catalyzes the first condensation reaction which initiates fatty acid synthesis and may therefore play a role in governing the total rate of fatty acid production. Possesses both acetoacetyl-ACP synthase and acetyl transacylase activities. Its substrate specificity determines the biosynthesis of branched-chain and/or straight-chain of fatty acids. This is Beta-ketoacyl-[acyl-carrier-protein] synthase III from Azobacteroides pseudotrichonymphae genomovar. CFP2.